The sequence spans 453 residues: Ribosomal protein uS12 methylthiotransferase RimO (453 aa).

The region spanning 3-118 (KKVGIISLGC…IAKVIEEFYS (116 aa)) is the MTTase N-terminal domain. [4Fe-4S] cluster-binding residues include C12, C48, C81, C162, C166, and C169. One can recognise a Radical SAM core domain in the interval 148 to 378 (STNSGYAYLK…MQLQKEIVQR (231 aa)). The region spanning 381-449 (ESRLEKVYKT…DYDLIGEVIN (69 aa)) is the TRAM domain.

Belongs to the methylthiotransferase family. RimO subfamily. [4Fe-4S] cluster is required as a cofactor.

It localises to the cytoplasm. It catalyses the reaction L-aspartate(89)-[ribosomal protein uS12]-hydrogen + (sulfur carrier)-SH + AH2 + 2 S-adenosyl-L-methionine = 3-methylsulfanyl-L-aspartate(89)-[ribosomal protein uS12]-hydrogen + (sulfur carrier)-H + 5'-deoxyadenosine + L-methionine + A + S-adenosyl-L-homocysteine + 2 H(+). Functionally, catalyzes the methylthiolation of an aspartic acid residue of ribosomal protein uS12. This is Ribosomal protein uS12 methylthiotransferase RimO from Acetivibrio thermocellus (strain ATCC 27405 / DSM 1237 / JCM 9322 / NBRC 103400 / NCIMB 10682 / NRRL B-4536 / VPI 7372) (Clostridium thermocellum).